Consider the following 1637-residue polypeptide: Probable serine/threonine-protein kinase gdt2 (1637 aa).

The first 19 residues, 1–19, serve as a signal peptide directing secretion; it reads MNYILYILLILIIFSINNT. The Extracellular portion of the chain corresponds to 20–896; it reads FSIGSFVYTP…IPVEKINLLP (877 aa). The chain crosses the membrane as a helical span at residues 897-917; it reads IIVPICVTVLVLLSILIVFFG. Topologically, residues 918–1637 are cytoplasmic; that stretch reads ARYYKHKKRR…NNNNNNNNNN (720 aa). Positions 977–990 are enriched in polar residues; sequence SDIQTQSENNNLEP. Residues 977 to 1000 are disordered; the sequence is SDIQTQSENNNLEPTTVETTTTTT. Over residues 991 to 1000 the composition is skewed to low complexity; it reads TTVETTTTTT. A Protein kinase domain is found at 1290 to 1547; the sequence is IIIKNYISEG…LSKYLKHLLK (258 aa). ATP is bound by residues 1296 to 1304 and Lys1317; that span reads ISEGTFGIV. Asp1408 functions as the Proton acceptor in the catalytic mechanism. A disordered region spans residues 1557–1637; sequence DKDKKNKKKN…NNNNNNNNNN (81 aa). Composition is skewed to low complexity over residues 1568–1589 and 1597–1637; these read NNNNNNNNNNNNNNNNNNNNNN and NNNI…NNNN.

In the N-terminal section; belongs to the GDT family. It in the C-terminal section; belongs to the protein kinase superfamily. TKL Ser/Thr protein kinase family.

The protein localises to the membrane. The catalysed reaction is L-seryl-[protein] + ATP = O-phospho-L-seryl-[protein] + ADP + H(+). It catalyses the reaction L-threonyl-[protein] + ATP = O-phospho-L-threonyl-[protein] + ADP + H(+). Its function is as follows. Regulates the transition between growth and differentiation. The chain is Probable serine/threonine-protein kinase gdt2 (gdt2) from Dictyostelium discoideum (Social amoeba).